Here is a 184-residue protein sequence, read N- to C-terminus: GTP cyclohydrolase 1 (184 aa).

Zn(2+)-binding residues include Cys75, His78, and Cys146.

Belongs to the GTP cyclohydrolase I family. As to quaternary structure, toroid-shaped homodecamer, composed of two pentamers of five dimers.

The enzyme catalyses GTP + H2O = 7,8-dihydroneopterin 3'-triphosphate + formate + H(+). Its pathway is cofactor biosynthesis; 7,8-dihydroneopterin triphosphate biosynthesis; 7,8-dihydroneopterin triphosphate from GTP: step 1/1. The protein is GTP cyclohydrolase 1 of Streptococcus sanguinis (strain SK36).